We begin with the raw amino-acid sequence, 156 residues long: Deoxyuridine 5'-triphosphate nucleotidohydrolase (156 aa).

Residues 76-78, Asn89, 93-95, and Lys103 contribute to the substrate site; these read RSG and TVD.

This sequence belongs to the dUTPase family. The cofactor is Mg(2+).

The enzyme catalyses dUTP + H2O = dUMP + diphosphate + H(+). The protein operates within pyrimidine metabolism; dUMP biosynthesis; dUMP from dCTP (dUTP route): step 2/2. In terms of biological role, this enzyme is involved in nucleotide metabolism: it produces dUMP, the immediate precursor of thymidine nucleotides and it decreases the intracellular concentration of dUTP so that uracil cannot be incorporated into DNA. The polypeptide is Deoxyuridine 5'-triphosphate nucleotidohydrolase (Rhizobium etli (strain ATCC 51251 / DSM 11541 / JCM 21823 / NBRC 15573 / CFN 42)).